Consider the following 287-residue polypeptide: Energy-coupling factor transporter ATP-binding protein EcfA2 (287 aa).

The ABC transporter domain maps to 3-246; it reads VKFSQVSYVY…TNYVNQLHLD (244 aa). 40–47 is an ATP binding site; the sequence is GQTGSGKS.

It belongs to the ABC transporter superfamily. Energy-coupling factor EcfA family. In terms of assembly, forms a stable energy-coupling factor (ECF) transporter complex composed of 2 membrane-embedded substrate-binding proteins (S component), 2 ATP-binding proteins (A component) and 2 transmembrane proteins (T component).

The protein localises to the cell membrane. ATP-binding (A) component of a common energy-coupling factor (ECF) ABC-transporter complex. Unlike classic ABC transporters this ECF transporter provides the energy necessary to transport a number of different substrates. This Staphylococcus saprophyticus subsp. saprophyticus (strain ATCC 15305 / DSM 20229 / NCIMB 8711 / NCTC 7292 / S-41) protein is Energy-coupling factor transporter ATP-binding protein EcfA2.